The sequence spans 326 residues: Acetyl-coenzyme A carboxylase carboxyl transferase subunit alpha (326 aa).

The region spanning 45–298 (LEARAMQLRE…KQVLLENLDE (254 aa)) is the CoA carboxyltransferase C-terminal domain.

Belongs to the AccA family. In terms of assembly, acetyl-CoA carboxylase is a heterohexamer composed of biotin carboxyl carrier protein (AccB), biotin carboxylase (AccC) and two subunits each of ACCase subunit alpha (AccA) and ACCase subunit beta (AccD).

It is found in the cytoplasm. The catalysed reaction is N(6)-carboxybiotinyl-L-lysyl-[protein] + acetyl-CoA = N(6)-biotinyl-L-lysyl-[protein] + malonyl-CoA. Its pathway is lipid metabolism; malonyl-CoA biosynthesis; malonyl-CoA from acetyl-CoA: step 1/1. In terms of biological role, component of the acetyl coenzyme A carboxylase (ACC) complex. First, biotin carboxylase catalyzes the carboxylation of biotin on its carrier protein (BCCP) and then the CO(2) group is transferred by the carboxyltransferase to acetyl-CoA to form malonyl-CoA. The sequence is that of Acetyl-coenzyme A carboxylase carboxyl transferase subunit alpha from Nostoc punctiforme (strain ATCC 29133 / PCC 73102).